We begin with the raw amino-acid sequence, 356 residues long: 4-hydroxy-2-oxovalerate aldolase (356 aa).

The Pyruvate carboxyltransferase domain maps to 7–257; that stretch reads PRVTDTTLRD…NPGLDVFKLM (251 aa). Substrate is bound at residue 15 to 16; that stretch reads RD. Position 16 (D16) interacts with Mn(2+). H19 functions as the Proton acceptor in the catalytic mechanism. S169 and H196 together coordinate substrate. 2 residues coordinate Mn(2+): H196 and H198. Y287 is a binding site for substrate.

This sequence belongs to the 4-hydroxy-2-oxovalerate aldolase family.

It catalyses the reaction (S)-4-hydroxy-2-oxopentanoate = acetaldehyde + pyruvate. The chain is 4-hydroxy-2-oxovalerate aldolase from Thermomicrobium roseum (strain ATCC 27502 / DSM 5159 / P-2).